A 434-amino-acid chain; its full sequence is Methylenetetrahydrofolate--tRNA-(uracil-5-)-methyltransferase TrmFO (434 aa).

10-15 (GAGLAG) serves as a coordination point for FAD.

This sequence belongs to the MnmG family. TrmFO subfamily. Requires FAD as cofactor.

It is found in the cytoplasm. The enzyme catalyses uridine(54) in tRNA + (6R)-5,10-methylene-5,6,7,8-tetrahydrofolate + NADH + H(+) = 5-methyluridine(54) in tRNA + (6S)-5,6,7,8-tetrahydrofolate + NAD(+). The catalysed reaction is uridine(54) in tRNA + (6R)-5,10-methylene-5,6,7,8-tetrahydrofolate + NADPH + H(+) = 5-methyluridine(54) in tRNA + (6S)-5,6,7,8-tetrahydrofolate + NADP(+). In terms of biological role, catalyzes the folate-dependent formation of 5-methyl-uridine at position 54 (M-5-U54) in all tRNAs. In Bacillus anthracis (strain A0248), this protein is Methylenetetrahydrofolate--tRNA-(uracil-5-)-methyltransferase TrmFO.